The primary structure comprises 215 residues: C-type lectin domain family 4 member D (215 aa).

Over 1-17 (MGLEKPQSKLEGGMHPQ) the chain is Cytoplasmic. The chain crosses the membrane as a helical; Signal-anchor for type II membrane protein span at residues 18–38 (LIPSVIAVVFILLLSVCFIAS). Over 39 to 215 (CLVTHHNFSR…ICKIPGTTLN (177 aa)) the chain is Extracellular. Residue N45 is glycosylated (N-linked (GlcNAc...) asparagine). A disulfide bridge connects residues C84 and C95. The region spanning 91–208 (FQSNCYFPLT…CNFEASRICK (118 aa)) is the C-type lectin domain. N102 and N111 each carry an N-linked (GlcNAc...) asparagine glycan. 2 cysteine pairs are disulfide-bonded: C112-C207 and C182-C199. Residues E173, D175, N195, and D196 each coordinate Ca(2+).

In terms of assembly, heterodimer with CLEC4E; disulfide-linked. CLEC4E acts as a bridge for interaction between CLEC4D and FCER1G to form a functional complex. Heterodimer with CLEC6A; this heterodimer forms a pattern recognition receptor (PRR) against fungal infection. In terms of tissue distribution, expressed weakly in peripheral blood leukocytes, bone marrow and spleen. Expression is confined mostly in monocytes and macrophage and seems to be up-regulated by IL-6, IL-10, TNF-alpha and IFN-gamma.

The protein resides in the cell membrane. Calcium-dependent lectin that acts as a pattern recognition receptor (PRR) of the innate immune system: recognizes damage-associated molecular patterns (DAMPs) of pathogen-associated molecular patterns (PAMPs) of bacteria and fungi. The PAMPs include alpha-mannans on C.albicans hypheas and mycobacterial trehalose 6,6'-dimycolate (TDM). Interacts with signaling adapter Fc receptor gamma chain/FCER1G, likely via CLEC4E, to form a functional complex in myeloid cells. Binding of mycobacterial TDM or C.albicans alpha-mannans to this receptor complex leads to phosphorylation of the immunoreceptor tyrosine-based activation motif (ITAM) of FCER1G, triggering activation of SYK, CARD9 and NF-kappa-B, consequently driving maturation of antigen-presenting cells and shaping antigen-specific priming of T-cells toward effector T-helper 1 and T-helper 17 cell subtypes. The heterodimer formed with CLEC6A is active against fungal infection. Functions as an endocytic receptor. May be involved in antigen uptake at the site of infection, either for clearance of the antigen, or for processing and further presentation to T-cells. This chain is C-type lectin domain family 4 member D, found in Homo sapiens (Human).